A 103-amino-acid chain; its full sequence is Large ribosomal subunit protein bL21 (103 aa).

It belongs to the bacterial ribosomal protein bL21 family. Part of the 50S ribosomal subunit. Contacts protein L20.

In terms of biological role, this protein binds to 23S rRNA in the presence of protein L20. The polypeptide is Large ribosomal subunit protein bL21 (Psychrobacter arcticus (strain DSM 17307 / VKM B-2377 / 273-4)).